A 145-amino-acid polypeptide reads, in one-letter code: 3-dehydroquinate dehydratase (145 aa).

The Proton acceptor role is filled by tyrosine 24. Substrate contacts are provided by asparagine 75, histidine 81, and aspartate 88. Residue histidine 101 is the Proton donor of the active site. Residues 102–103 and arginine 112 each bind substrate; that span reads IS.

The protein belongs to the type-II 3-dehydroquinase family. In terms of assembly, homododecamer.

The enzyme catalyses 3-dehydroquinate = 3-dehydroshikimate + H2O. It functions in the pathway metabolic intermediate biosynthesis; chorismate biosynthesis; chorismate from D-erythrose 4-phosphate and phosphoenolpyruvate: step 3/7. Catalyzes a trans-dehydration via an enolate intermediate. This is 3-dehydroquinate dehydratase from Corynebacterium glutamicum (strain R).